The following is a 466-amino-acid chain: Asparagine--tRNA ligase (466 aa).

Belongs to the class-II aminoacyl-tRNA synthetase family. In terms of assembly, homodimer.

Its subcellular location is the cytoplasm. The catalysed reaction is tRNA(Asn) + L-asparagine + ATP = L-asparaginyl-tRNA(Asn) + AMP + diphosphate + H(+). This Enterobacter sp. (strain 638) protein is Asparagine--tRNA ligase.